The primary structure comprises 393 residues: Formate-dependent phosphoribosylglycinamide formyltransferase (393 aa).

Residues 22–23 (EL) and E82 each bind N(1)-(5-phospho-beta-D-ribosyl)glycinamide. Residues R114, K155, 160–165 (SSGKGQ), 195–198 (EGFI), and E203 contribute to the ATP site. Positions 119-308 (RLAAEELDLP…QFALHARAIL (190 aa)) constitute an ATP-grasp domain. 2 residues coordinate Mg(2+): E267 and E279. N(1)-(5-phospho-beta-D-ribosyl)glycinamide is bound by residues D286, K356, and 363–364 (RR).

This sequence belongs to the PurK/PurT family. Homodimer.

The enzyme catalyses N(1)-(5-phospho-beta-D-ribosyl)glycinamide + formate + ATP = N(2)-formyl-N(1)-(5-phospho-beta-D-ribosyl)glycinamide + ADP + phosphate + H(+). It functions in the pathway purine metabolism; IMP biosynthesis via de novo pathway; N(2)-formyl-N(1)-(5-phospho-D-ribosyl)glycinamide from N(1)-(5-phospho-D-ribosyl)glycinamide (formate route): step 1/1. Functionally, involved in the de novo purine biosynthesis. Catalyzes the transfer of formate to 5-phospho-ribosyl-glycinamide (GAR), producing 5-phospho-ribosyl-N-formylglycinamide (FGAR). Formate is provided by PurU via hydrolysis of 10-formyl-tetrahydrofolate. In Pseudomonas fluorescens (strain ATCC BAA-477 / NRRL B-23932 / Pf-5), this protein is Formate-dependent phosphoribosylglycinamide formyltransferase.